The chain runs to 103 residues: Integration host factor subunit beta (103 aa).

Belongs to the bacterial histone-like protein family. Heterodimer of an alpha and a beta chain.

In terms of biological role, this protein is one of the two subunits of integration host factor, a specific DNA-binding protein that functions in genetic recombination as well as in transcriptional and translational control. The protein is Integration host factor subunit beta of Rhizobium meliloti (strain 1021) (Ensifer meliloti).